We begin with the raw amino-acid sequence, 361 residues long: Peptide chain release factor 1 (361 aa).

Gln-235 bears the N5-methylglutamine mark.

This sequence belongs to the prokaryotic/mitochondrial release factor family. Post-translationally, methylated by PrmC. Methylation increases the termination efficiency of RF1.

The protein localises to the cytoplasm. In terms of biological role, peptide chain release factor 1 directs the termination of translation in response to the peptide chain termination codons UAG and UAA. This is Peptide chain release factor 1 from Xanthomonas euvesicatoria pv. vesicatoria (strain 85-10) (Xanthomonas campestris pv. vesicatoria).